The chain runs to 329 residues: METIHFTKVHGSQNDFFLVDEEENHITEWSDEKRANFAIKLCDRKHSLGGADGILYVTKSSEVGPIGQMRVVNSDGSIASMCGNGLRTVARYLLEKHALTDAKVETMKAILDVKKATSLGFDIPTYQVEISPVKFAAETLPMHVGVEKLFNQVIPELDAELAFSAVSVPNPHLITFVDQAVLDSNKQEKLASYLNSENPYFPDGVNVSFVKRLSDDAIYVRTFERGVGFTNACGTAMSACSLIKKMLDNNILETPLNVYNDGGRVQVTAKKDAAGEISLQLIGNATFVSKGSVRYENDIVTELTNEATAEQAQYQALVKEVKEFLKTTE.

Substrate is bound by residues Asn14 and Asn73. Residue Cys82 is the Proton donor of the active site. Substrate contacts are provided by residues 83–84, Asn170, Asn206, and 224–225; these read GN and ER. Cys233 functions as the Proton acceptor in the catalytic mechanism. Substrate is bound at residue 234-235; sequence GT.

The protein belongs to the diaminopimelate epimerase family. In terms of assembly, homodimer.

It localises to the cytoplasm. It carries out the reaction (2S,6S)-2,6-diaminopimelate = meso-2,6-diaminopimelate. The protein operates within amino-acid biosynthesis; L-lysine biosynthesis via DAP pathway; DL-2,6-diaminopimelate from LL-2,6-diaminopimelate: step 1/1. In terms of biological role, catalyzes the stereoinversion of LL-2,6-diaminopimelate (L,L-DAP) to meso-diaminopimelate (meso-DAP), a precursor of L-lysine and an essential component of the bacterial peptidoglycan. The sequence is that of Diaminopimelate epimerase from Listeria monocytogenes serotype 4b (strain F2365).